Reading from the N-terminus, the 295-residue chain is UDP-N-acetylenolpyruvoylglucosamine reductase (295 aa).

An FAD-binding PCMH-type domain is found at 23 to 188 (QVGGPADFLA…ISAKFALKPG (166 aa)). R167 is a catalytic residue. S217 acts as the Proton donor in catalysis. E287 is a catalytic residue.

Belongs to the MurB family. The cofactor is FAD.

It localises to the cytoplasm. It carries out the reaction UDP-N-acetyl-alpha-D-muramate + NADP(+) = UDP-N-acetyl-3-O-(1-carboxyvinyl)-alpha-D-glucosamine + NADPH + H(+). It participates in cell wall biogenesis; peptidoglycan biosynthesis. Functionally, cell wall formation. The polypeptide is UDP-N-acetylenolpyruvoylglucosamine reductase (Streptococcus equi subsp. zooepidemicus (strain H70)).